Here is a 141-residue protein sequence, read N- to C-terminus: 15 kDa lipoprotein (141 aa).

Positions 1-17 are cleaved as a signal peptide; that stretch reads MVKRGRFALCLAVLLGA. A lipid anchor (N-palmitoyl cysteine) is attached at C18. The S-diacylglycerol cysteine moiety is linked to residue C18.

The protein localises to the cell membrane. This chain is 15 kDa lipoprotein (tpp15), found in Treponema pallidum (strain Nichols).